The following is a 93-amino-acid chain: Class II hydrophobin 1 (93 aa).

The N-terminal stretch at 1–16 (MKFFAVAALFVASAMA) is a signal peptide. Intrachain disulfides connect Cys-24–Cys-74, Cys-35–Cys-65, Cys-36–Cys-48, and Cys-75–Cys-86.

It belongs to the cerato-ulmin hydrophobin family. In terms of assembly, interacts with maize ubiquilin 1-like (UBL) protein. Homotetramer. Further self-assembles to form highly ordered films at water-air interfaces through intermolecular interactions.

It localises to the cell membrane. In terms of biological role, aerial growth, conidiation, and dispersal of filamentous fungi in the environment rely upon a capability of their secreting small amphipathic proteins called hydrophobins (HPBs) with low sequence identity. Class I can self-assemble into an outermost layer of rodlet bundles on aerial cell surfaces, conferring cellular hydrophobicity that supports fungal growth, development and dispersal; whereas Class II form highly ordered films at water-air interfaces through intermolecular interactions but contribute nothing to the rodlet structure. Hyd1 is a class II hydrophobin that acts as an elicitor of induced systemic resistance (ISR) in plants. During interaction with the plant, binds with the maize target protein UBL in order to recruit more UBL proteins in maize roots to elicit plant defense responses, including cell death as well as brassinosteroid, jasmonate (JA) and ethylene (ET) signaling. In Trichoderma harzianum (Hypocrea lixii), this protein is Class II hydrophobin 1.